A 248-amino-acid polypeptide reads, in one-letter code: Type III pantothenate kinase (248 aa).

Residue 6–13 (DCGNSFIK) coordinates ATP. Residues Tyr92 and 99 to 102 (GLDR) each bind substrate. Asp101 functions as the Proton acceptor in the catalytic mechanism. Asp121 contacts K(+). Thr124 provides a ligand contact to ATP. Residue Thr180 participates in substrate binding.

Belongs to the type III pantothenate kinase family. Homodimer. The cofactor is NH4(+). Requires K(+) as cofactor.

The protein resides in the cytoplasm. The enzyme catalyses (R)-pantothenate + ATP = (R)-4'-phosphopantothenate + ADP + H(+). Its pathway is cofactor biosynthesis; coenzyme A biosynthesis; CoA from (R)-pantothenate: step 1/5. Its function is as follows. Catalyzes the phosphorylation of pantothenate (Pan), the first step in CoA biosynthesis. The sequence is that of Type III pantothenate kinase from Ectopseudomonas mendocina (strain ymp) (Pseudomonas mendocina).